A 117-amino-acid polypeptide reads, in one-letter code: Protein RALF-like 32 (117 aa).

An N-terminal signal peptide occupies residues 1 to 26 (MEIKPSRIFSTITIFFLCLLLAHVTS). Positions 27 to 64 (KASSSSLCNGSVAECSSMVETEEMSVIMESWSSQRLTE) are cleaved as a propeptide — removed in mature form. N-linked (GlcNAc...) asparagine glycosylation occurs at Asn-35. The disordered stretch occupies residues 77 to 107 (RNQPACDGGKRGESYSTQCLPPPSNPYSRGC). Intrachain disulfides connect Cys-82-Cys-95 and Cys-107-Cys-113.

This sequence belongs to the plant rapid alkalinization factor (RALF) family. Post-translationally, proteolytically cleaved, probably by S1P, a subtilisin-like serine protease (subtilase).

The protein resides in the secreted. In terms of biological role, cell signaling peptide that may regulate plant stress, growth, and development. Mediates a rapid alkalinization of extracellular space by mediating a transient increase in the cytoplasmic Ca(2+) concentration leading to a calcium-dependent signaling events through a cell surface receptor and a concomitant activation of some intracellular mitogen-activated protein kinases. The protein is Protein RALF-like 32 (RALFL32) of Arabidopsis thaliana (Mouse-ear cress).